Reading from the N-terminus, the 155-residue chain is MGEMPFWKMKSLEEMSGAEWESLCDGCGLCCLNKLEDWDSSEIAWTSIRCTLLDGESCRCRDYDNRQATVPDCIQLTPEAVREISWLPPTCGYRLVSEGRDLYWWHPLVSGDPETVHAAGISVRGRTVPEDDIDIEDYEDYLVTWPLEVGREPAE.

Belongs to the UPF0260 family.

This is UPF0260 protein Smed_0627 from Sinorhizobium medicae (strain WSM419) (Ensifer medicae).